Consider the following 139-residue polypeptide: 3-hydroxyacyl-[acyl-carrier-protein] dehydratase FabZ (139 aa).

His46 is an active-site residue.

This sequence belongs to the thioester dehydratase family. FabZ subfamily.

It is found in the cytoplasm. The catalysed reaction is a (3R)-hydroxyacyl-[ACP] = a (2E)-enoyl-[ACP] + H2O. In terms of biological role, involved in unsaturated fatty acids biosynthesis. Catalyzes the dehydration of short chain beta-hydroxyacyl-ACPs and long chain saturated and unsaturated beta-hydroxyacyl-ACPs. The sequence is that of 3-hydroxyacyl-[acyl-carrier-protein] dehydratase FabZ from Streptococcus pyogenes serotype M1.